Here is a 95-residue protein sequence, read N- to C-terminus: Aspartyl/glutamyl-tRNA(Asn/Gln) amidotransferase subunit C (95 aa).

It belongs to the GatC family. Heterotrimer of A, B and C subunits.

It catalyses the reaction L-glutamyl-tRNA(Gln) + L-glutamine + ATP + H2O = L-glutaminyl-tRNA(Gln) + L-glutamate + ADP + phosphate + H(+). It carries out the reaction L-aspartyl-tRNA(Asn) + L-glutamine + ATP + H2O = L-asparaginyl-tRNA(Asn) + L-glutamate + ADP + phosphate + 2 H(+). In terms of biological role, allows the formation of correctly charged Asn-tRNA(Asn) or Gln-tRNA(Gln) through the transamidation of misacylated Asp-tRNA(Asn) or Glu-tRNA(Gln) in organisms which lack either or both of asparaginyl-tRNA or glutaminyl-tRNA synthetases. The reaction takes place in the presence of glutamine and ATP through an activated phospho-Asp-tRNA(Asn) or phospho-Glu-tRNA(Gln). This chain is Aspartyl/glutamyl-tRNA(Asn/Gln) amidotransferase subunit C, found in Chlorobium phaeobacteroides (strain DSM 266 / SMG 266 / 2430).